The chain runs to 449 residues: Chromosomal replication initiator protein DnaA (449 aa).

Positions 1–73 (MTQNPQWLWQ…TETIAELLQQ (73 aa)) are domain I, interacts with DnaA modulators. Residues 73–109 (QPVKVRLTSPEGNTLAATQSFYSSRSGQSTRPGKKTP) form a domain II region. Residues 90-103 (TQSFYSSRSGQSTR) are compositionally biased toward polar residues. Positions 90–110 (TQSFYSSRSGQSTRPGKKTPE) are disordered. The interval 110–326 (ELNSKYTFSR…GALLRAVTHI (217 aa)) is domain III, AAA+ region. 4 residues coordinate ATP: Gly154, Gly156, Lys157, and Thr158. The domain IV, binds dsDNA stretch occupies residues 327–449 (AISGLPMTVE…DRINHHHQNL (123 aa)).

It belongs to the DnaA family. Oligomerizes as a right-handed, spiral filament on DNA at oriC.

The protein localises to the cytoplasm. Plays an essential role in the initiation and regulation of chromosomal replication. ATP-DnaA binds to the origin of replication (oriC) to initiate formation of the DNA replication initiation complex once per cell cycle. Binds the DnaA box (a 9 base pair repeat at the origin) and separates the double-stranded (ds)DNA. Forms a right-handed helical filament on oriC DNA; dsDNA binds to the exterior of the filament while single-stranded (ss)DNA is stabiized in the filament's interior. The ATP-DnaA-oriC complex binds and stabilizes one strand of the AT-rich DNA unwinding element (DUE), permitting loading of DNA polymerase. After initiation quickly degrades to an ADP-DnaA complex that is not apt for DNA replication. Binds acidic phospholipids. The polypeptide is Chromosomal replication initiator protein DnaA (Picosynechococcus sp. (strain ATCC 27264 / PCC 7002 / PR-6) (Agmenellum quadruplicatum)).